Consider the following 202-residue polypeptide: Secreted RxLR effector protein 11 (202 aa).

Residues 1-23 form the signal peptide; the sequence is MRLNFTKLFAGAVALAWTTESMA. Residues 49 to 61 carry the RxLR-dEER motif; that stretch reads RRLRTINGADEER.

It belongs to the RxLR effector family.

Its subcellular location is the secreted. The protein resides in the host cytoplasm. It localises to the host nucleus. In terms of biological role, effector that acts as a broad suppressor of cell death to interrupt plant immunity. Inhibits cell death induced by cell death-inducing proteins, including the PAMP elicitor INF1 from P.infestans. In Plasmopara viticola (Downy mildew of grapevine), this protein is Secreted RxLR effector protein 11.